A 303-amino-acid chain; its full sequence is Bifunctional protein FolD (303 aa).

NADP(+) is bound by residues 169–171 (GRG), Thr196, and Val237.

Belongs to the tetrahydrofolate dehydrogenase/cyclohydrolase family. In terms of assembly, homodimer.

It carries out the reaction (6R)-5,10-methylene-5,6,7,8-tetrahydrofolate + NADP(+) = (6R)-5,10-methenyltetrahydrofolate + NADPH. The catalysed reaction is (6R)-5,10-methenyltetrahydrofolate + H2O = (6R)-10-formyltetrahydrofolate + H(+). It functions in the pathway one-carbon metabolism; tetrahydrofolate interconversion. In terms of biological role, catalyzes the oxidation of 5,10-methylenetetrahydrofolate to 5,10-methenyltetrahydrofolate and then the hydrolysis of 5,10-methenyltetrahydrofolate to 10-formyltetrahydrofolate. This Micrococcus luteus (strain ATCC 4698 / DSM 20030 / JCM 1464 / CCM 169 / CCUG 5858 / IAM 1056 / NBRC 3333 / NCIMB 9278 / NCTC 2665 / VKM Ac-2230) (Micrococcus lysodeikticus) protein is Bifunctional protein FolD.